The chain runs to 912 residues: Protein translocase subunit SecA (912 aa).

ATP contacts are provided by residues Q87, 105–109, and D510; that span reads GEGKT. The tract at residues 854–912 is disordered; it reads KLRHEQASAAQAEGEGDDGQQGQQATPETFVRQERKVGRNEPCPCGSGKKYKQCCGKVS. C896, C898, C907, and C908 together coordinate Zn(2+).

This sequence belongs to the SecA family. Monomer and homodimer. Part of the essential Sec protein translocation apparatus which comprises SecA, SecYEG and auxiliary proteins SecDF-YajC and YidC. The cofactor is Zn(2+).

It is found in the cell inner membrane. The protein resides in the cytoplasm. It carries out the reaction ATP + H2O + cellular proteinSide 1 = ADP + phosphate + cellular proteinSide 2.. In terms of biological role, part of the Sec protein translocase complex. Interacts with the SecYEG preprotein conducting channel. Has a central role in coupling the hydrolysis of ATP to the transfer of proteins into and across the cell membrane, serving both as a receptor for the preprotein-SecB complex and as an ATP-driven molecular motor driving the stepwise translocation of polypeptide chains across the membrane. The sequence is that of Protein translocase subunit SecA from Marinobacter nauticus (strain ATCC 700491 / DSM 11845 / VT8) (Marinobacter aquaeolei).